A 580-amino-acid polypeptide reads, in one-letter code: Transcription factor coe2-B (580 aa).

The interval 60–63 (RKSN) is interaction with DNA. The segment at 148–167 (CRVLLTHEVMCSRCCEKKSC) adopts a C5-type zinc-finger fold. 2 interaction with DNA regions span residues 194–201 (NCLKTAGN) and 233–236 (NNSK). Residues 259–341 (PCIKAISPSE…CKGAPGRFIY (83 aa)) form the IPT/TIG domain. The tract at residues 455-492 (IRNTSSISPRGYSSSSTPQQSNYSTPSNSMNGYSNVPM) is disordered. Residues 459–481 (SSISPRGYSSSSTPQQSNYSTPS) show a composition bias toward low complexity. Over residues 482–492 (NSMNGYSNVPM) the composition is skewed to polar residues.

This sequence belongs to the COE family. As to expression, in embryos, expressed in precursors of primary neurons. In adults, expressed at high levels in the brain, and at low levels in the somatic muscles, testis, and possibly the spleen.

The protein localises to the nucleus. Functionally, may play a pivotal role in the transcriptional cascade that specifies primary neurons in embryos. Stabilizes the higher neural potential of selected progenitor cells that express neurog2/X-ngnr-1 by maintaining Delta-Notch signaling. Thus ensures the transition between neural competence and irreversible commitment to a neural fate. Also promotes neuronal differentiation by activating neurod1 expression, directly or indirectly. The polypeptide is Transcription factor coe2-B (Xenopus laevis (African clawed frog)).